Reading from the N-terminus, the 277-residue chain is NH(3)-dependent NAD(+) synthetase (277 aa).

46 to 53 (GISGGQDS) contributes to the ATP binding site. Asp-52 is a binding site for Mg(2+). A deamido-NAD(+)-binding site is contributed by Arg-142. Thr-162 contacts ATP. Glu-167 is a Mg(2+) binding site. Deamido-NAD(+) is bound by residues Lys-175 and Asp-182. Residues Lys-191 and Thr-213 each coordinate ATP. Residue 263–264 (HK) participates in deamido-NAD(+) binding.

This sequence belongs to the NAD synthetase family. In terms of assembly, homodimer.

The catalysed reaction is deamido-NAD(+) + NH4(+) + ATP = AMP + diphosphate + NAD(+) + H(+). The protein operates within cofactor biosynthesis; NAD(+) biosynthesis; NAD(+) from deamido-NAD(+) (ammonia route): step 1/1. Its function is as follows. Catalyzes the ATP-dependent amidation of deamido-NAD to form NAD. Uses ammonia as a nitrogen source. The sequence is that of NH(3)-dependent NAD(+) synthetase from Corynebacterium glutamicum (strain R).